The sequence spans 1207 residues: Brassinosteroid LRR receptor kinase (1207 aa).

The first 34 residues, 1–34 (MKAHKTVFNQHPLSLNKLFFVLLLIFFLPPASPA), serve as a signal peptide directing secretion. Residues 71–78 (CSFTGVSC) carry the Cys pair 1 motif. LRR repeat units lie at residues 109–131 (NLESLVLKNANLSGSLTSAAKSQ), 135–157 (TLDSIDLAENTISGPISDISSFG), 161–181 (NLKSLNLSKNFLDPPGKEMLK), 186–207 (SLQVLDLSYNNISGFNLFPWVS), 213–234 (ELEFFSLKGNKLAGSIPELDFK), 235–257 (NLSYLDLSANNFSTVFPSFKDCS), 258–280 (NLQHLDLSSNKFYGDIGSSLSSC), 282–304 (KLSFLNLTNNQFVGLVPKLPSES), 305–325 (LQYLYLRGNDFQGVYPNQLAD), 329–350 (TVVELDLSYNNFSGMVPESLGE), 353–374 (SLELVDISYNNFSGKLPVDTLS), 378–400 (NIKTMVLSFNKFVGGLPDSFSNL), 402–423 (KLETLDMSSNNLTGVIPSGICK), 428–450 (NLKVLYLQNNLFKGPIPDSLSNC), 452–474 (QLVSLDLSFNYLTGSIPSSLGSL), 476–499 (KLKDLILWLNQLSGEIPQELMYLQ), 500–523 (ALENLILDFNDLTGPIPASLSNCT), 524–547 (KLNWISLSNNQLSGEIPASLGRLS), 548–570 (NLAILKLGNNSISGNIPAELGNC), and 572–594 (SLIWLDLNTNFLNGSIPPPLFKQ). Asparagine 119 carries N-linked (GlcNAc...) asparagine glycosylation. 2 N-linked (GlcNAc...) asparagine glycosylation sites follow: asparagine 166 and asparagine 196. 2 N-linked (GlcNAc...) asparagine glycosylation sites follow: asparagine 235 and asparagine 245. An N-linked (GlcNAc...) asparagine glycan is attached at asparagine 287. Asparagine 339 and asparagine 363 each carry an N-linked (GlcNAc...) asparagine glycan. N-linked (GlcNAc...) asparagine glycosylation is found at asparagine 412 and asparagine 449. An N-linked (GlcNAc...) asparagine glycan is attached at asparagine 521. Residues asparagine 556, asparagine 584, asparagine 646, and asparagine 662 are each glycosylated (N-linked (GlcNAc...) asparagine). LRR repeat units lie at residues 664–686 (SMIFLDLSYNKLEGSIPKELGAM), 688–711 (YLSILNLGHNDLSGMIPQQLGGLK), 712–735 (NVAILDLSYNRFNGTIPNSLTSLT), and 736–758 (LLGEIDLSNNNLSGMIPESAPFD). 3 N-linked (GlcNAc...) asparagine glycosylation sites follow: asparagine 724, asparagine 746, and asparagine 767. The Cys pair 2 motif lies at 771–779 (CGYPLPIPC). A helical membrane pass occupies residues 803-823 (SVAMGLLFSLFCIFGLIIVAI). The 276-residue stretch at 888 to 1163 (FHNDSLVGSG…IQVMAMFKEI (276 aa)) folds into the Protein kinase domain. Residues 894–902 (VGSGGFGDV) and lysine 916 contribute to the ATP site. The active-site Proton acceptor is the aspartate 1014.

Belongs to the protein kinase superfamily. Ser/Thr protein kinase family.

The protein resides in the cell membrane. The enzyme catalyses L-seryl-[protein] + ATP = O-phospho-L-seryl-[protein] + ADP + H(+). It catalyses the reaction L-threonyl-[protein] + ATP = O-phospho-L-threonyl-[protein] + ADP + H(+). Receptor with a serine/threonine-protein kinase activity. Regulates, in response to brassinosteroid binding, a signaling cascade involved in plant development, including expression of light- and stress-regulated genes, promotion of cell elongation, normal leaf and chloroplast senescence, and flowering. May be involved in a feedback regulation of brassinosteroid biosynthesis. May be also involved in the perception of systemin, a peptide hormone responsible for the systemic activation of defense genes in leaves of wounded plants. This chain is Brassinosteroid LRR receptor kinase (CURL3), found in Solanum lycopersicum (Tomato).